Reading from the N-terminus, the 222-residue chain is Putative adhesin RP828 (222 aa).

Residues 1–22 form the signal peptide; that stretch reads MKKLLLIATASATILSSSVSFA.

Its function is as follows. Adheres to biotinylated epithelial (Vero cell) proteins. The protein is Putative adhesin RP828 of Rickettsia prowazekii (strain Madrid E).